Reading from the N-terminus, the 481-residue chain is Cardiolipin synthase A (481 aa).

2 helical membrane-spanning segments follow: residues phenylalanine 10–leucine 30 and isoleucine 40–phenylalanine 60. PLD phosphodiesterase domains are found at residues valine 220–tyrosine 247 and glutamine 394–serine 421. Active-site residues include histidine 225, lysine 227, aspartate 232, histidine 399, lysine 401, and aspartate 406.

It belongs to the phospholipase D family. Cardiolipin synthase subfamily. ClsA sub-subfamily.

The protein localises to the cell inner membrane. It catalyses the reaction 2 a 1,2-diacyl-sn-glycero-3-phospho-(1'-sn-glycerol) = a cardiolipin + glycerol. Its function is as follows. Catalyzes the reversible phosphatidyl group transfer from one phosphatidylglycerol molecule to another to form cardiolipin (CL) (diphosphatidylglycerol) and glycerol. The polypeptide is Cardiolipin synthase A (Pseudomonas putida (Arthrobacter siderocapsulatus)).